Here is a 376-residue protein sequence, read N- to C-terminus: Glucose-1-phosphate adenylyltransferase (376 aa).

Alpha-D-glucose 1-phosphate is bound by residues Tyr-101, Gly-166, 181-182 (EK), and Ser-192.

Belongs to the bacterial/plant glucose-1-phosphate adenylyltransferase family. As to quaternary structure, homotetramer.

The catalysed reaction is alpha-D-glucose 1-phosphate + ATP + H(+) = ADP-alpha-D-glucose + diphosphate. It participates in glycan biosynthesis; glycogen biosynthesis. Involved in the biosynthesis of ADP-glucose, a building block required for the elongation reactions to produce glycogen. Catalyzes the reaction between ATP and alpha-D-glucose 1-phosphate (G1P) to produce pyrophosphate and ADP-Glc. The sequence is that of Glucose-1-phosphate adenylyltransferase from Bacillus cereus (strain ZK / E33L).